The following is a 278-amino-acid chain: Shikimate dehydrogenase (NADP(+)) (278 aa).

Shikimate is bound by residues 19 to 21 (SLS) and Thr66. Residue Lys70 is the Proton acceptor of the active site. Residue Asp82 participates in NADP(+) binding. Shikimate is bound by residues Asn91 and Asp107. Residues 133–137 (GSGGA), 157–162 (NRTRAR), and Ile222 each bind NADP(+). Tyr224 lines the shikimate pocket. Gly245 provides a ligand contact to NADP(+).

It belongs to the shikimate dehydrogenase family. As to quaternary structure, homodimer.

The catalysed reaction is shikimate + NADP(+) = 3-dehydroshikimate + NADPH + H(+). It participates in metabolic intermediate biosynthesis; chorismate biosynthesis; chorismate from D-erythrose 4-phosphate and phosphoenolpyruvate: step 4/7. Functionally, involved in the biosynthesis of the chorismate, which leads to the biosynthesis of aromatic amino acids. Catalyzes the reversible NADPH linked reduction of 3-dehydroshikimate (DHSA) to yield shikimate (SA). This is Shikimate dehydrogenase (NADP(+)) from Jannaschia sp. (strain CCS1).